The primary structure comprises 269 residues: Uncharacterised methyltransferase MT1546 (269 aa).

Belongs to the methyltransferase superfamily.

The sequence is that of Uncharacterised methyltransferase MT1546 from Mycobacterium tuberculosis (strain CDC 1551 / Oshkosh).